The primary structure comprises 417 residues: Multifunctional CCA protein (417 aa).

ATP contacts are provided by Gly8 and Arg11. CTP is bound by residues Gly8 and Arg11. Mg(2+) contacts are provided by Asp21 and Asp23. The ATP site is built by Arg91, Arg137, and Arg140. CTP-binding residues include Arg91, Arg137, and Arg140. The region spanning 225-326 (SGIHTLMTLQ…LNVLKKTDAF (102 aa)) is the HD domain.

Belongs to the tRNA nucleotidyltransferase/poly(A) polymerase family. Bacterial CCA-adding enzyme type 1 subfamily. As to quaternary structure, monomer. Can also form homodimers and oligomers. The cofactor is Mg(2+). It depends on Ni(2+) as a cofactor.

It carries out the reaction a tRNA precursor + 2 CTP + ATP = a tRNA with a 3' CCA end + 3 diphosphate. It catalyses the reaction a tRNA with a 3' CCA end + 2 CTP + ATP = a tRNA with a 3' CCACCA end + 3 diphosphate. Functionally, catalyzes the addition and repair of the essential 3'-terminal CCA sequence in tRNAs without using a nucleic acid template. Adds these three nucleotides in the order of C, C, and A to the tRNA nucleotide-73, using CTP and ATP as substrates and producing inorganic pyrophosphate. tRNA 3'-terminal CCA addition is required both for tRNA processing and repair. Also involved in tRNA surveillance by mediating tandem CCA addition to generate a CCACCA at the 3' terminus of unstable tRNAs. While stable tRNAs receive only 3'-terminal CCA, unstable tRNAs are marked with CCACCA and rapidly degraded. The protein is Multifunctional CCA protein of Neisseria meningitidis serogroup A / serotype 4A (strain DSM 15465 / Z2491).